Here is a 430-residue protein sequence, read N- to C-terminus: Tektin-2 (430 aa).

Coiled coils occupy residues 75–162 (KETL…FQHL) and 226–380 (KNRA…IACK).

It belongs to the tektin family. In terms of assembly, microtubule inner protein component of sperm flagellar doublet microtubules. May interact with CCDC172. In terms of processing, ubiquitinated, leading to its degradation. Deubiquitinated by USP16, promoting its stability. Tyrosine phosphorylated. As to expression, expressed in the testes (at protein level).

It localises to the cytoplasm. Its subcellular location is the cytoskeleton. The protein localises to the cilium axoneme. It is found in the flagellum axoneme. The protein resides in the microtubule organizing center. Its function is as follows. Microtubule inner protein (MIP) part of the dynein-decorated doublet microtubules (DMTs) in cilia and flagellar axoneme. Plays a key role in the assembly or attachment of the inner dynein arm to microtubules in sperm flagella and tracheal cilia. Forms filamentous polymers in the walls of ciliary and flagellar microtubules. The polypeptide is Tektin-2 (Tekt2) (Mus musculus (Mouse)).